The following is a 784-amino-acid chain: Alpha-catulin (784 aa).

The tract at residues 35–247 (IKTKSIEQTL…LLLTASKTYL (213 aa)) is vinculin/alpha-catenin homology 1 (VH1) region. A coiled-coil region spans residues 387 to 414 (ASGLEVTVERLNRRLKDLSKQLQIVAME). The tract at residues 552–696 (PRPGKHGTTQ…MVKSPTVGKT (145 aa)) is vinculin/alpha-catenin homology 2 (VH2) region. A disordered region spans residues 737–784 (GSVNGRTGADGERTSRESTVWRRTPSIRRAAPPTSSHLSANNSSSIHI). Residues 745 to 756 (ADGERTSRESTV) show a composition bias toward basic and acidic residues. Low complexity predominate over residues 771–784 (SSHLSANNSSSIHI).

The protein belongs to the vinculin/alpha-catenin family. As to quaternary structure, interacts with slo-1 (via C-terminus); the interaction is required for localization of slo-1 to dense bodies in body wall muscle cells. Interacts (via N-terminus) with dystrophin complex member dyb-1 (via C-terminus); the interaction is required for localization of the dystrophin complex and ctn-1 near dense bodies in muscle cells. As to expression, expressed in body wall muscles, vulval muscles, stomatointestinal cells and pharyngeal muscle cells. Expressed in enteric muscles, nerve ring neurons and in the ventral nerve cord.

It localises to the cytoplasm. Required for slo-1 potassium ion channel clustering at presynaptic terminals and in egg-laying muscles; clustering of slo-1 mediates the intoxicating and sedatory effects of ethanol on worms. Required for slo-1 localization to dense bodies in body wall muscle cells. Maintains the localization of the dystrophin complex near muscle cell dense bodies via its interaction with complex member dyb-1 which is required for slo-1 localization in muscle while slo-1 localization in neurons is independent of the dystrophin complex. The protein is Alpha-catulin of Caenorhabditis elegans.